The following is a 142-amino-acid chain: MASSGVAGGRQAEDTLQPPPELLPESKPPPPPQPLPVAALPPPAAPRPQSPAGAKEENYSFLPLVHNVIKCMDKDSPDLHQDLNALKTKFQELRKLIGTMPGIHVSPEQQQQQLHSLREQVRTKNELLQKYKSLCMFEIPKD.

The segment at 1 to 58 (MASSGVAGGRQAEDTLQPPPELLPESKPPPPPQPLPVAALPPPAAPRPQSPAGAKEEN) is disordered. Ala2 bears the N-acetylalanine mark. The segment covering 17-49 (QPPPELLPESKPPPPPQPLPVAALPPPAAPRPQ) has biased composition (pro residues). Residues 78–134 (DLHQDLNALKTKFQELRKLIGTMPGIHVSPEQQQQQLHSLREQVRTKNELLQKYKSL) adopt a coiled-coil conformation. Ser106 is subject to Phosphoserine.

Belongs to the Mediator complex subunit 9 family. As to quaternary structure, component of the Mediator complex, which is composed of MED1, MED4, MED6, MED7, MED8, MED9, MED10, MED11, MED12, MED13, MED13L, MED14, MED15, MED16, MED17, MED18, MED19, MED20, MED21, MED22, MED23, MED24, MED25, MED26, MED27, MED29, MED30, MED31, CCNC, CDK8 and CDC2L6/CDK11. The MED12, MED13, CCNC and CDK8 subunits form a distinct module termed the CDK8 module. Mediator containing the CDK8 module is less active than Mediator lacking this module in supporting transcriptional activation. Individual preparations of the Mediator complex lacking one or more distinct subunits have been variously termed ARC, CRSP, DRIP, PC2, SMCC and TRAP.

It is found in the nucleus. In terms of biological role, component of the Mediator complex, a coactivator involved in the regulated transcription of nearly all RNA polymerase II-dependent genes. Mediator functions as a bridge to convey information from gene-specific regulatory proteins to the basal RNA polymerase II transcription machinery. Mediator is recruited to promoters by direct interactions with regulatory proteins and serves as a scaffold for the assembly of a functional preinitiation complex with RNA polymerase II and the general transcription factors. The sequence is that of Mediator of RNA polymerase II transcription subunit 9 (Med9) from Mus musculus (Mouse).